The following is a 196-amino-acid chain: ATP-dependent Clp protease proteolytic subunit (196 aa).

Residue Ser-101 is the Nucleophile of the active site. The active site involves His-126.

Belongs to the peptidase S14 family. In terms of assembly, component of the chloroplastic Clp protease core complex.

The protein localises to the plastid. It localises to the chloroplast stroma. It carries out the reaction Hydrolysis of proteins to small peptides in the presence of ATP and magnesium. alpha-casein is the usual test substrate. In the absence of ATP, only oligopeptides shorter than five residues are hydrolyzed (such as succinyl-Leu-Tyr-|-NHMec, and Leu-Tyr-Leu-|-Tyr-Trp, in which cleavage of the -Tyr-|-Leu- and -Tyr-|-Trp bonds also occurs).. Cleaves peptides in various proteins in a process that requires ATP hydrolysis. Has a chymotrypsin-like activity. Plays a major role in the degradation of misfolded proteins. This chain is ATP-dependent Clp protease proteolytic subunit, found in Vitis vinifera (Grape).